The chain runs to 253 residues: Triosephosphate isomerase (253 aa).

9-11 (NWK) provides a ligand contact to substrate. Histidine 95 functions as the Electrophile in the catalytic mechanism. The active-site Proton acceptor is glutamate 167. Substrate is bound by residues glycine 173, serine 213, and 234–235 (GG). Serine 213 is modified (phosphoserine).

The protein belongs to the triosephosphate isomerase family. Homodimer.

It is found in the cytoplasm. It carries out the reaction D-glyceraldehyde 3-phosphate = dihydroxyacetone phosphate. Its pathway is carbohydrate biosynthesis; gluconeogenesis. It functions in the pathway carbohydrate degradation; glycolysis; D-glyceraldehyde 3-phosphate from glycerone phosphate: step 1/1. Its function is as follows. Involved in the gluconeogenesis. Catalyzes stereospecifically the conversion of dihydroxyacetone phosphate (DHAP) to D-glyceraldehyde-3-phosphate (G3P). The protein is Triosephosphate isomerase of Bacillus licheniformis (strain ATCC 14580 / DSM 13 / JCM 2505 / CCUG 7422 / NBRC 12200 / NCIMB 9375 / NCTC 10341 / NRRL NRS-1264 / Gibson 46).